Consider the following 498-residue polypeptide: Archaemetzincin-1 (498 aa).

His-261 contacts Zn(2+). Glu-262 serves as the catalytic Proton acceptor. Zn(2+) is bound by residues His-265, Cys-272, Cys-277, Cys-296, and Cys-299. Residues Gln-332–Pro-381 form a disordered region.

This sequence belongs to the peptidase M54 family. Zn(2+) is required as a cofactor.

Probable zinc metalloprotease. The sequence is that of Archaemetzincin-1 (AMZ1) from Homo sapiens (Human).